Consider the following 31-residue polypeptide: MPTITSYFGFLLAALTITSALFIGLSKIRLI.

A helical transmembrane segment spans residues I4–G24.

Belongs to the PetL family. The 4 large subunits of the cytochrome b6-f complex are cytochrome b6, subunit IV (17 kDa polypeptide, PetD), cytochrome f and the Rieske protein, while the 4 small subunits are PetG, PetL, PetM and PetN. The complex functions as a dimer.

The protein resides in the plastid. It localises to the chloroplast thylakoid membrane. Component of the cytochrome b6-f complex, which mediates electron transfer between photosystem II (PSII) and photosystem I (PSI), cyclic electron flow around PSI, and state transitions. PetL is important for photoautotrophic growth as well as for electron transfer efficiency and stability of the cytochrome b6-f complex. The sequence is that of Cytochrome b6-f complex subunit 6 from Gossypium hirsutum (Upland cotton).